Here is a 114-residue protein sequence, read N- to C-terminus: Ferritin-like protein (114 aa).

Glutamate 29, glutamate 59, and histidine 62 together coordinate Fe cation. Residues 86–114 (FTDKPITEIEEETSGGSENTGGDLGIRKL) are cargo-loading peptide. The tract at residues 94-114 (IEEETSGGSENTGGDLGIRKL) is disordered. Residues 103-114 (ENTGGDLGIRKL) are compositionally biased toward gly residues.

It belongs to the ferritin-like superfamily. Probably forms a decamer which binds to the pentameric axis of the interior of the protein shell; as the Flp cargo protein is flexible, packing into the shell is not rigid. 3, 4 or 5 cargo decamers bind inside the encapulin nanocompartment. Fe cation serves as cofactor.

It localises to the encapsulin nanocompartment. Its function is as follows. Cargo protein of a type 1 encapsulin nanocompartment. A ferritin-like protein that probably stores iron in the encapsulin nanocompartment. This chain is Ferritin-like protein, found in Thermotoga maritima (strain ATCC 43589 / DSM 3109 / JCM 10099 / NBRC 100826 / MSB8).